The chain runs to 306 residues: 4-hydroxy-3-methylbut-2-enyl diphosphate reductase (306 aa).

Residue C12 participates in [4Fe-4S] cluster binding. (2E)-4-hydroxy-3-methylbut-2-enyl diphosphate contacts are provided by H41 and H74. Residues H41 and H74 each contribute to the dimethylallyl diphosphate site. Isopentenyl diphosphate contacts are provided by H41 and H74. C96 is a binding site for [4Fe-4S] cluster. H124 is a binding site for (2E)-4-hydroxy-3-methylbut-2-enyl diphosphate. H124 serves as a coordination point for dimethylallyl diphosphate. H124 contributes to the isopentenyl diphosphate binding site. The Proton donor role is filled by E126. T164 contributes to the (2E)-4-hydroxy-3-methylbut-2-enyl diphosphate binding site. C194 is a [4Fe-4S] cluster binding site. 4 residues coordinate (2E)-4-hydroxy-3-methylbut-2-enyl diphosphate: S222, S223, N224, and S266. Dimethylallyl diphosphate-binding residues include S222, S223, N224, and S266. S222, S223, N224, and S266 together coordinate isopentenyl diphosphate.

This sequence belongs to the IspH family. The cofactor is [4Fe-4S] cluster.

The catalysed reaction is isopentenyl diphosphate + 2 oxidized [2Fe-2S]-[ferredoxin] + H2O = (2E)-4-hydroxy-3-methylbut-2-enyl diphosphate + 2 reduced [2Fe-2S]-[ferredoxin] + 2 H(+). The enzyme catalyses dimethylallyl diphosphate + 2 oxidized [2Fe-2S]-[ferredoxin] + H2O = (2E)-4-hydroxy-3-methylbut-2-enyl diphosphate + 2 reduced [2Fe-2S]-[ferredoxin] + 2 H(+). It participates in isoprenoid biosynthesis; dimethylallyl diphosphate biosynthesis; dimethylallyl diphosphate from (2E)-4-hydroxy-3-methylbutenyl diphosphate: step 1/1. The protein operates within isoprenoid biosynthesis; isopentenyl diphosphate biosynthesis via DXP pathway; isopentenyl diphosphate from 1-deoxy-D-xylulose 5-phosphate: step 6/6. Its function is as follows. Catalyzes the conversion of 1-hydroxy-2-methyl-2-(E)-butenyl 4-diphosphate (HMBPP) into a mixture of isopentenyl diphosphate (IPP) and dimethylallyl diphosphate (DMAPP). Acts in the terminal step of the DOXP/MEP pathway for isoprenoid precursor biosynthesis. The polypeptide is 4-hydroxy-3-methylbut-2-enyl diphosphate reductase (Ruthia magnifica subsp. Calyptogena magnifica).